The primary structure comprises 184 residues: Photosystem I assembly protein Ycf4 (184 aa).

Transmembrane regions (helical) follow at residues 22–42 (FCWA…GISS) and 57–77 (ILFF…LFIS).

It belongs to the Ycf4 family.

The protein resides in the plastid. It localises to the chloroplast thylakoid membrane. Its function is as follows. Seems to be required for the assembly of the photosystem I complex. This is Photosystem I assembly protein Ycf4 from Illicium oligandrum (Star anise).